The sequence spans 317 residues: MDSNNQIEPCLSRKSSEGKPQIFTTLRNIDLNLLTIFEAVYVHKGIVNAAKVLNLTPSAISQSIQKLRVIFPDPLFIRKGQGVTPTAFAMHLHEYISQGLESILGALDIEGSYDKQRTITIATTPSVGALVLPVIYRAIKTHYPQLLLRNPPISDAENQLSQFQTDLIIDNMFCTNRTVQHHVLFTDNMVLICREGNPLLSLEDDRETIDNAAHVLLLPEEQNFSGLRQRVQEMFPDRQINFTSYNILTIAALVANSDMLAIIPSRFYNLFSRCWPLEKLPFPSLNEEQIDFSIHYNKFSLRDPILHGVIDVIRNAF.

The HTH lysR-type domain maps to 29-86 (IDLNLLTIFEAVYVHKGIVNAAKVLNLTPSAISQSIQKLRVIFPDPLFIRKGQGVTPT). Residues 46-65 (IVNAAKVLNLTPSAISQSIQ) constitute a DNA-binding region (H-T-H motif).

The protein belongs to the LysR transcriptional regulatory family.

This is an uncharacterized protein from Escherichia coli (strain K12).